Reading from the N-terminus, the 435-residue chain is Trigger factor (435 aa).

The region spanning 164-249 (GDFAKFDFEG…LHEIQGKKAG (86 aa)) is the PPIase FKBP-type domain.

It belongs to the FKBP-type PPIase family. Tig subfamily.

The protein resides in the cytoplasm. It carries out the reaction [protein]-peptidylproline (omega=180) = [protein]-peptidylproline (omega=0). In terms of biological role, involved in protein export. Acts as a chaperone by maintaining the newly synthesized protein in an open conformation. Functions as a peptidyl-prolyl cis-trans isomerase. This is Trigger factor from Campylobacter fetus subsp. fetus (strain 82-40).